The primary structure comprises 404 residues: WD repeat and SOCS box-containing protein 2 (404 aa).

WD repeat units follow at residues 16–55 (GRPH…LIPW), 81–140 (GSPK…IWEV), 144–183 (LLLL…IWDL), 188–226 (KQIQ…LWSM), 230–268 (TLIR…MWDP), 283–322 (DPAM…IWAL), and 325–362 (KTPI…FWTA). The interval 68–87 (AKSRSSKNETKGRGSPKEKT) is disordered. The SOCS box domain occupies 356–404 (HVQFWTAPRVLSSLKHLCRKALRSFLTTYQVLALPIPKKMKEFLTYRTF).

Its pathway is protein modification; protein ubiquitination. May be a substrate-recognition component of a SCF-like ECS (Elongin-Cullin-SOCS-box protein) E3 ubiquitin ligase complex which mediates the ubiquitination and subsequent proteasomal degradation of target proteins. This chain is WD repeat and SOCS box-containing protein 2 (WSB2), found in Homo sapiens (Human).